Reading from the N-terminus, the 276-residue chain is UPF0328 protein ECU04_0100 (276 aa).

The segment at 1 to 24 is disordered; the sequence is MGIIDVQRSHLTATPSKERDAPAH.

The protein belongs to the UPF0328 family.

In Encephalitozoon cuniculi (strain GB-M1) (Microsporidian parasite), this protein is UPF0328 protein ECU04_0100.